A 77-amino-acid polypeptide reads, in one-letter code: Translation initiation factor IF-1, chloroplastic (77 aa).

An S1-like domain is found at 1 to 71 (MKEQKLIHEG…TKGRIIYRLR (71 aa)).

This sequence belongs to the IF-1 family. In terms of assembly, component of the 30S ribosomal translation pre-initiation complex which assembles on the 30S ribosome in the order IF-2 and IF-3, IF-1 and N-formylmethionyl-tRNA(fMet); mRNA recruitment can occur at any time during PIC assembly.

The protein resides in the plastid. Its subcellular location is the chloroplast. In terms of biological role, one of the essential components for the initiation of protein synthesis. Stabilizes the binding of IF-2 and IF-3 on the 30S subunit to which N-formylmethionyl-tRNA(fMet) subsequently binds. Helps modulate mRNA selection, yielding the 30S pre-initiation complex (PIC). Upon addition of the 50S ribosomal subunit IF-1, IF-2 and IF-3 are released leaving the mature 70S translation initiation complex. This Dioscorea elephantipes (Elephant's foot yam) protein is Translation initiation factor IF-1, chloroplastic.